The chain runs to 454 residues: CBL-interacting protein kinase 17 (454 aa).

Residues 13–268 (YEMGRTLGEG…MAGIKSHEWF (256 aa)) enclose the Protein kinase domain. ATP-binding positions include 19–27 (LGEGNFGKV) and Lys42. The active-site Proton acceptor is Asp136. Residues 154-183 (DFGLSALPQHLGNDGLLHTTCGSPNYIAPE) form an activation loop region. In terms of domain architecture, NAF spans 304–328 (KNSHQINAFQLIGMASSLDLSGFFE). The tract at residues 334-363 (QRRIRFTSTHPPKDAFDKIESSATELGFQV) is PPI.

This sequence belongs to the protein kinase superfamily. CAMK Ser/Thr protein kinase family. SNF1 subfamily. Requires Mn(2+) as cofactor.

The enzyme catalyses L-seryl-[protein] + ATP = O-phospho-L-seryl-[protein] + ADP + H(+). It carries out the reaction L-threonyl-[protein] + ATP = O-phospho-L-threonyl-[protein] + ADP + H(+). Functionally, CIPK serine-threonine protein kinases interact with CBL proteins. Binding of a CBL protein to the regulatory NAF domain of CIPK protein lead to the activation of the kinase in a calcium-dependent manner. The chain is CBL-interacting protein kinase 17 (CIPK17) from Oryza sativa subsp. japonica (Rice).